Here is a 239-residue protein sequence, read N- to C-terminus: MVIKAQSPAGFAEEYIVESIWNNRFPPGSILPAERELSELIGVTRTTLREVLQRLARDGWLTIQHGKPTKVNNFWETSGLNILETVARLDHDRVPQLIDNLLAVRTNISAIFIRTAFKNNPEKSLEVLTHQLTTENSADEFSELDYNIFRGLAFASGNPIYGLILNGLKGLYTRVGRYYFSNVQAKELALSFYKKLALLCEQKDTEHVMDCVRQYGKESGIIWHELQSPLPSDLEEVKR.

An HTH gntR-type domain is found at 6–74; it reads QSPAGFAEEY…HGKPTKVNNF (69 aa). Residues 34–53 constitute a DNA-binding region (H-T-H motif); the sequence is ERELSELIGVTRTTLREVLQ.

In terms of assembly, homodimer.

The protein localises to the cytoplasm. Its function is as follows. Multifunctional regulator of fatty acid metabolism. This is Fatty acid metabolism regulator protein from Proteus mirabilis (strain HI4320).